We begin with the raw amino-acid sequence, 326 residues long: D-amino-acid oxidase (326 aa).

Gly14, Val15, Ile16, Asp36, Ser44, Ala48, Ala49, Ile50, and Val157 together coordinate FAD. Tyr219 and Arg274 together coordinate D-proline. Residues Tyr219 and Arg274 each contribute to the D-serine site. The FAD site is built by Arg274, Gly299, Gly300, Gly302, and Thr304. Gly300 is a binding site for D-proline. Gly300 contacts D-serine.

Belongs to the DAMOX/DASOX family. As to quaternary structure, homodimer. FAD is required as a cofactor.

It localises to the cytoplasm. It is found in the secreted. The protein resides in the cell wall. It catalyses the reaction a D-alpha-amino acid + O2 + H2O = a 2-oxocarboxylate + H2O2 + NH4(+). The enzyme catalyses D-phenylalanine + O2 + H2O = 3-phenylpyruvate + H2O2 + NH4(+). It carries out the reaction D-lysine + O2 + H2O = 6-amino-2-oxohexanoate + H2O2 + NH4(+). The catalysed reaction is D-methionine + O2 + H2O = 4-methylsulfanyl-2-oxobutanoate + H2O2 + NH4(+). It catalyses the reaction D-arginine + O2 + H2O = 5-guanidino-2-oxopentanoate + H2O2 + NH4(+). The enzyme catalyses D-ornithine + O2 + H2O = 5-amino-2-oxopentanoate + H2O2 + NH4(+). It carries out the reaction D-leucine + O2 + H2O = 4-methyl-2-oxopentanoate + H2O2 + NH4(+). The catalysed reaction is D-alanine + O2 + H2O = pyruvate + H2O2 + NH4(+). It catalyses the reaction D-valine + O2 + H2O = 3-methyl-2-oxobutanoate + H2O2 + NH4(+). The enzyme catalyses D-histidine + O2 + H2O = 3-(imidazol-5-yl)pyruvate + H2O2 + NH4(+). In terms of biological role, catalyzes the oxidative deamination of D-amino acids with broad substrate specificity. The sequence is that of D-amino-acid oxidase from Glutamicibacter protophormiae (Brevibacterium protophormiae).